Reading from the N-terminus, the 478-residue chain is Cytochrome P450 monooxygenase asqL (478 aa).

Residue Cys407 participates in heme binding.

The protein belongs to the cytochrome P450 family. Heme is required as a cofactor.

It functions in the pathway secondary metabolite biosynthesis. Its pathway is alkaloid biosynthesis. The protein operates within mycotoxin biosynthesis. Functionally, cytochrome P450 monooxygenase; part of the gene cluster that mediates the biosynthesis of the aspoquinolone mycotoxins. The role of asqL within the aspoquinolone pathway has still to be determined. The first step of the pathway is catalyzed by the nonribosomal peptide synthetase asqK that condenses anthranilic acid and O-methyl-L-tyrosine to produce 4'-methoxycyclopeptin. 4'-methoxycyclopeptin is then converted to 4'-methoxydehydrocyclopeptin by the ketoglutarate-dependent dioxygenase asqJ. AsqJ also converts its first product 4'-methoxydehydrocyclopeptin to 4'-methoxycyclopenin. The following conversion of 4'-methoxycyclopenin into 4'-methoxyviridicatin is catalyzed by the cyclopenase asqI. 4'-methoxyviridicatin is the precursor of quinolone natural products, and is further converted to quinolinone B. The prenyltransferase asqH1 then catalyzes the canonical Friedel-Crafts alkylation of quinolinone B with dimethylallyl cation to yield dimethylallyl quinolone, which is subjected to FAD-dependent dehydrogenation by the FAD-linked oxidoreductase asqF to yield conjugated aryl diene. The delta(3') double bond then serves as the site of the second alkylation with DMAPP catalyzed by the prenyltransferase asqH2 to yield a carbenium ion intermediate, which can be attacked by H(2)O to yield a styrenyl quinolone containing a C3'-hydroxyprenyl chain. The FAD-dependent monooxygenase asqG performs epoxidation of the terminal C7'-C8' olefin. Finally, after dehydratation of the epoxide at C3 by asqC, the quinolone epoxide rearrangement protein asqO catalyzes an enzymatic 3-exo-tet cyclization to yield the cyclopropyl-THF ring system in aspoquinolone. This chain is Cytochrome P450 monooxygenase asqL, found in Emericella nidulans (strain FGSC A4 / ATCC 38163 / CBS 112.46 / NRRL 194 / M139) (Aspergillus nidulans).